The following is a 525-amino-acid chain: GMP synthase [glutamine-hydrolyzing] (525 aa).

The region spanning 9–207 (RILILDFGSQ…VLEICGCAAL (199 aa)) is the Glutamine amidotransferase type-1 domain. C86 acts as the Nucleophile in catalysis. Active-site residues include H181 and E183. In terms of domain architecture, GMPS ATP-PPase spans 208–400 (WTPATIIEDA…LGLPYDMLYR (193 aa)). An ATP-binding site is contributed by 235-241 (SGGVDSS).

Homodimer.

It carries out the reaction XMP + L-glutamine + ATP + H2O = GMP + L-glutamate + AMP + diphosphate + 2 H(+). The protein operates within purine metabolism; GMP biosynthesis; GMP from XMP (L-Gln route): step 1/1. Its function is as follows. Catalyzes the synthesis of GMP from XMP. This chain is GMP synthase [glutamine-hydrolyzing], found in Edwardsiella ictaluri (strain 93-146).